The following is a 311-amino-acid chain: Putative HTH-type transcriptional regulatory protein MTH_967 (311 aa).

The 59-residue stretch at 134-192 folds into the HTH cro/C1-type domain; the sequence is LREVREEYNLSLKDLADLAHVSRKTIYKYENGLARASAETAMILEEILNIRITLSIDIF. The H-T-H motif DNA-binding region spans 145-164; the sequence is LKDLADLAHVSRKTIYKYEN.

This Methanothermobacter thermautotrophicus (strain ATCC 29096 / DSM 1053 / JCM 10044 / NBRC 100330 / Delta H) (Methanobacterium thermoautotrophicum) protein is Putative HTH-type transcriptional regulatory protein MTH_967.